Here is a 203-residue protein sequence, read N- to C-terminus: GTP-binding protein YPTM2 (203 aa).

Residues 15–23 (GDSGVGKSC), 33–40 (YLDSYIST), 63–67 (DTAGQ), 121–124 (NKSD), and 151–153 (SAK) contribute to the GTP site. An Effector region motif is present at residues 37–45 (YISTIGVDF). S-geranylgeranyl cysteine attachment occurs at residues C200 and C201.

It belongs to the small GTPase superfamily. Rab family. As to expression, its expression is weak in stems, higher in roots, leaves and coleoptiles, but highest in flowers.

Its subcellular location is the cell membrane. Its function is as follows. Protein transport. Probably involved in vesicular traffic. The chain is GTP-binding protein YPTM2 (YPTM2) from Zea mays (Maize).